The following is a 313-amino-acid chain: tRNA dimethylallyltransferase (313 aa).

ATP is bound at residue 11-18; it reads GPTAAGKS. 13-18 lines the substrate pocket; sequence TAAGKS. Interaction with substrate tRNA stretches follow at residues 36-39, 160-164, and 244-249; these read DSAT, QRIQR, and RCVGYR.

This sequence belongs to the IPP transferase family. As to quaternary structure, monomer. The cofactor is Mg(2+).

It carries out the reaction adenosine(37) in tRNA + dimethylallyl diphosphate = N(6)-dimethylallyladenosine(37) in tRNA + diphosphate. In terms of biological role, catalyzes the transfer of a dimethylallyl group onto the adenine at position 37 in tRNAs that read codons beginning with uridine, leading to the formation of N6-(dimethylallyl)adenosine (i(6)A). The protein is tRNA dimethylallyltransferase of Bordetella parapertussis (strain 12822 / ATCC BAA-587 / NCTC 13253).